Consider the following 335-residue polypeptide: Probable cytosolic iron-sulfur protein assembly protein Ciao1 (335 aa).

WD repeat units lie at residues 12–51, 57–96, 101–140, 146–185, 192–231, 250–289, and 301–335; these read GHKG…WTTK, GHKR…FECN, GHEN…EFEC, PHTQ…SDWD, SHTS…NDAG, QHSR…KRDE, and AHDQ…KMTE.

The protein belongs to the WD repeat CIA1 family.

In terms of biological role, essential component of the cytosolic iron-sulfur (Fe/S) protein assembly machinery. Required for the maturation of extramitochondrial Fe/S proteins. The chain is Probable cytosolic iron-sulfur protein assembly protein Ciao1 from Drosophila ananassae (Fruit fly).